The following is a 521-amino-acid chain: Protein NRT1/ PTR FAMILY 5.5 (521 aa).

A run of 12 helical transmembrane segments spans residues 3-23 (VLSW…LYLT), 35-55 (AIVN…QFLV), 62-82 (FWML…LAIS), 96-116 (FYVA…SLGV), 134-154 (LVSF…AAIA), 165-185 (FTIP…GACS), 279-299 (VPLF…NTFF), 310-327 (FGSW…SEAA), 356-376 (PYGI…AAHV), 394-414 (VPMS…ITGI), 440-460 (VGVC…VGSV), and 478-498 (YYWV…IVTY).

It belongs to the major facilitator superfamily. Proton-dependent oligopeptide transporter (POT/PTR) (TC 2.A.17) family. Expressed in roots.

It localises to the membrane. The chain is Protein NRT1/ PTR FAMILY 5.5 (NPF5.5) from Arabidopsis thaliana (Mouse-ear cress).